An 886-amino-acid polypeptide reads, in one-letter code: DNA double-strand break repair Rad50 ATPase (886 aa).

ATP-binding positions include 32–38 (NGAGKSS) and glutamine 137. 2 coiled-coil regions span residues 181 to 240 (IRSL…KEIK) and 320 to 416 (RKKE…GDLN). One can recognise a Zinc-hook domain in the interval 391–489 (IKDVSDRINQ…EREELEATRN (99 aa)). Residues cysteine 437 and cysteine 440 each contribute to the Zn(2+) site. Coiled coils occupy residues 450–657 (AKIR…ISEL) and 682–718 (EADKGKIKGSLEEKIKNIEEKERNIEELRNKMNEESK).

The protein belongs to the SMC family. RAD50 subfamily. As to quaternary structure, homodimer. Forms a heterotetramer composed of two Mre11 subunits and two Rad50 subunits. Interacts with Mre11 and HerA. Requires Zn(2+) as cofactor.

Its function is as follows. Part of the Rad50/Mre11 complex, which is involved in the early steps of DNA double-strand break (DSB) repair. The complex may facilitate opening of the processed DNA ends to aid in the recruitment of HerA and NurA. Rad50 controls the balance between DNA end bridging and DNA resection via ATP-dependent structural rearrangements of the Rad50/Mre11 complex. The protein is DNA double-strand break repair Rad50 ATPase of Sulfolobus acidocaldarius (strain ATCC 33909 / DSM 639 / JCM 8929 / NBRC 15157 / NCIMB 11770).